Reading from the N-terminus, the 317-residue chain is UV DNA damage endonuclease (317 aa).

It belongs to the uve1/UvsE family.

In terms of biological role, component in a DNA repair pathway. Removal of UV LIGHT damaged nucleotides. Recognizes pyrimidine dimers and cleave a phosphodiester bond immediately 5' to the lesion. This chain is UV DNA damage endonuclease, found in Bacillus cereus (strain G9842).